The following is a 362-amino-acid chain: Phosphoserine aminotransferase (362 aa).

Residues serine 9 and arginine 42 each contribute to the L-glutamate site. Pyridoxal 5'-phosphate is bound by residues 76 to 77, tryptophan 102, threonine 153, aspartate 174, and glutamine 197; that span reads GR. At lysine 198 the chain carries N6-(pyridoxal phosphate)lysine. 239 to 240 contacts pyridoxal 5'-phosphate; the sequence is NT.

This sequence belongs to the class-V pyridoxal-phosphate-dependent aminotransferase family. SerC subfamily. Homodimer. Requires pyridoxal 5'-phosphate as cofactor.

The protein resides in the cytoplasm. The enzyme catalyses O-phospho-L-serine + 2-oxoglutarate = 3-phosphooxypyruvate + L-glutamate. The catalysed reaction is 4-(phosphooxy)-L-threonine + 2-oxoglutarate = (R)-3-hydroxy-2-oxo-4-phosphooxybutanoate + L-glutamate. The protein operates within amino-acid biosynthesis; L-serine biosynthesis; L-serine from 3-phospho-D-glycerate: step 2/3. It functions in the pathway cofactor biosynthesis; pyridoxine 5'-phosphate biosynthesis; pyridoxine 5'-phosphate from D-erythrose 4-phosphate: step 3/5. Functionally, catalyzes the reversible conversion of 3-phosphohydroxypyruvate to phosphoserine and of 3-hydroxy-2-oxo-4-phosphonooxybutanoate to phosphohydroxythreonine. The chain is Phosphoserine aminotransferase from Shigella dysenteriae serotype 1 (strain Sd197).